A 143-amino-acid polypeptide reads, in one-letter code: FAD synthase (143 aa).

ATP is bound by residues 10 to 11 (TF), 15 to 18 (HPGH), and D93.

This sequence belongs to the archaeal FAD synthase family. As to quaternary structure, homodimer. Requires a divalent metal cation as cofactor.

The enzyme catalyses FMN + ATP + H(+) = FAD + diphosphate. It participates in cofactor biosynthesis; FAD biosynthesis; FAD from FMN: step 1/1. Functionally, catalyzes the transfer of the AMP portion of ATP to flavin mononucleotide (FMN) to produce flavin adenine dinucleotide (FAD) coenzyme. This Haloterrigena turkmenica (strain ATCC 51198 / DSM 5511 / JCM 9101 / NCIMB 13204 / VKM B-1734 / 4k) (Halococcus turkmenicus) protein is FAD synthase.